The following is a 78-amino-acid chain: Putative defensin-like protein 202 (78 aa).

The N-terminal stretch at Met-1–Gly-29 is a signal peptide. 3 disulfide bridges follow: Cys-44/Cys-65, Cys-49/Cys-74, and Cys-53/Cys-76.

This sequence belongs to the DEFL family.

The protein resides in the secreted. The polypeptide is Putative defensin-like protein 202 (Arabidopsis thaliana (Mouse-ear cress)).